Here is a 156-residue protein sequence, read N- to C-terminus: Endoribonuclease YbeY (156 aa).

Positions 122, 126, and 132 each coordinate Zn(2+).

It belongs to the endoribonuclease YbeY family. Requires Zn(2+) as cofactor.

The protein resides in the cytoplasm. Functionally, single strand-specific metallo-endoribonuclease involved in late-stage 70S ribosome quality control and in maturation of the 3' terminus of the 16S rRNA. The polypeptide is Endoribonuclease YbeY (Geobacillus sp. (strain WCH70)).